Reading from the N-terminus, the 240-residue chain is UDP-2,3-diacylglucosamine hydrolase (240 aa).

The Mn(2+) site is built by Asp8, His10, Asp41, Asn79, and His114. Substrate is bound at residue 79-80; the sequence is NR. Residues Asp122, Ser160, Asn164, Lys167, and His195 each coordinate substrate. The Mn(2+) site is built by His195 and His197.

Belongs to the LpxH family. It depends on Mn(2+) as a cofactor.

The protein localises to the cell inner membrane. It carries out the reaction UDP-2-N,3-O-bis[(3R)-3-hydroxytetradecanoyl]-alpha-D-glucosamine + H2O = 2-N,3-O-bis[(3R)-3-hydroxytetradecanoyl]-alpha-D-glucosaminyl 1-phosphate + UMP + 2 H(+). It functions in the pathway glycolipid biosynthesis; lipid IV(A) biosynthesis; lipid IV(A) from (3R)-3-hydroxytetradecanoyl-[acyl-carrier-protein] and UDP-N-acetyl-alpha-D-glucosamine: step 4/6. In terms of biological role, hydrolyzes the pyrophosphate bond of UDP-2,3-diacylglucosamine to yield 2,3-diacylglucosamine 1-phosphate (lipid X) and UMP by catalyzing the attack of water at the alpha-P atom. Involved in the biosynthesis of lipid A, a phosphorylated glycolipid that anchors the lipopolysaccharide to the outer membrane of the cell. This is UDP-2,3-diacylglucosamine hydrolase from Enterobacter sp. (strain 638).